The sequence spans 617 residues: MKNTDERYSMATCCAGGQSLRSKYGERAPNIQLSDRQWPSKKLTKSPIWLSTDLRDGNQALPNPMTLQQKWRMFQLLVSIGFTQIEVSFPCASQTEFDFTRQLIETPGATPDDVTLEVLSPCREDAIATSVRSLKGAKQAILFLYLATSDNYRETVLQLSEAEWLDQAKRCVEYARSITKDDPENCRTKWSFGFGFEDFANARPEAALRLGETIKTAWGPSKDNPVILGLATSVEATTPNVFADQVEYFSRNITEREKVCISIHTHNDRGGAVASAELACLAGGDRVEGCLFGNGERAGNLDLITCSMNMFTQGIETGLDFSDLLEIRRVYEEVTNLPVHPRQPYSGDFYFRAFAGAHQDAIRKGLAKRGRLAAMPSGLTQMSKGMIINGTSNEKIPSSTWRVPYLPLDPADLGFSFDSVIGVNSQSGKGGIAWLIQQGLGFNIPNELAAHYSQIIKKRSVSLERGLAAEEICDFFLEIYDLKSSYNTQLLKRLHSGFSQTIDMQQELEDATAPANNAAMDISKTMGIDVHCTMASSHVISSHDGEQLSNVAFVQCEIEQTTPCVWGVGVALSREEAVNRSLLLAARRKPGTETPDTKTSVNAIIQPLEVYSFSQKA.

The Pyruvate carboxyltransferase domain occupies 47–325; sequence PIWLSTDLRD…ETGLDFSDLL (279 aa).

Belongs to the alpha-IPM synthase/homocitrate synthase family. LeuA type 2 subfamily.

The catalysed reaction is 3-methyl-2-oxobutanoate + acetyl-CoA + H2O = (2S)-2-isopropylmalate + CoA + H(+). It functions in the pathway mycotoxin biosynthesis. Its function is as follows. 2-isopropylmalate synthase; part of the gene cluster that mediates the biosynthesis of pneumocandins, lipohexapeptides of the echinocandin family that prevent fungal cell wall formation by non-competitive inhibition of beta-1,3-glucan synthase. The 10,12-dimethylmyristoyl side chain is synthesized by the reducing polyketide synthase gloL/GLPKS4. The thioesterase gloN/GLHYD exclusively interacts with gloL/GLPKS4 to maintain turnover of the polyketide side chain. The 10R,12S-dimethylmyristic acid is then transferred to the first thiolation domain of the nonribosomal peptide synthetase gloA/GLNRPS4 by the acyl-AMP ligase gloD/GLligase, followed by its acylation to L-ornithine to trigger elongation of the cyclic hexapeptide. L-ornithine, 4R-hydroxyl-L-proline (generated from L-proline by the dioxygenase gloF/GLOXY2), 3S-hydroxyl-L-homotyrosine (generated by gloG/GLHtyB, gloH/GLHtyA, gloI/GLHtyC, gloJ/GLHtyD and hydroxylated at C-3 by the dioxygenase gloM/GLOXY1), 3R-hydroxyl-L-glutamine (generated from L-glutamine probably by the dioxygenase gloE/GLOXY3) and 3S-hydroxyl-L-proline (generated from L-proline by the dioxygenase gloF/GLOXY2 to yield pneumocandin B0), or 3S-hydroxyl-4S-methyl-L-proline (generated from L-leucine by the dioxygenase gloC/GLOXY4 to yield pneumocandin A0) are sequentially added to the growing chain. The last C domain of gloA/GLNRPS4 is proposed to be responsible for cyclization by condensation to form the peptide bond between L-ornithine and 3S-hydroxyl-4S-methyl-L-proline (for pneumocandin A0) or 3S-hydroxyl-L-proline (for pneumocandin B0). Finally, the subsequent C-4 hydroxylation of 3S-hydroxyl-L-homotyrosine and L-ornithine dihydroxylation at C-4 and C-5 are performed by the cytochrome P450 monooxygenases gloP/GLP450-1 and gloO/GLP450-2, respectively. The sequence is that of Isopropyl malate synthase gloH from Glarea lozoyensis (strain ATCC 20868 / MF5171).